A 367-amino-acid polypeptide reads, in one-letter code: Epoxide hydrolase 3 (367 aa).

The helical transmembrane segment at 22–42 (ALVMSLVYLAALVAAFVYSCI) threads the bilayer. The Nucleophile role is filled by Asp180. Residue Tyr288 is the Proton donor of the active site. His344 serves as the catalytic Proton acceptor.

It belongs to the AB hydrolase superfamily. Epoxide hydrolase family. In terms of tissue distribution, predominantly expressed in skin, esophagus, lung and tongue and to a lesser extent in pancreas and eye.

It localises to the microsome membrane. It carries out the reaction an epoxide + H2O = an ethanediol. The catalysed reaction is 9,10-epoxyoctadecanoate + H2O = 9,10-dihydroxyoctadecanoate. The enzyme catalyses 9,10-epoxy-(12Z)-octadecenoate + H2O = 9,10-dihydroxy-(12Z)-octadecenoate. It catalyses the reaction 8,9-epoxy-(5Z,11Z,14Z)-eicosatrienoate + H2O = 8,9-dihydroxy-(5Z,11Z,14Z)-eicosatrienoate. It carries out the reaction 11,12-epoxy-(5Z,8Z,14Z)-eicosatrienoate + H2O = 11,12-dihydroxy-(5Z,8Z,14Z)-eicosatrienoate. The catalysed reaction is 14,15-epoxy-(5Z,8Z,11Z)-eicosatrienoate + H2O = 14,15-dihydroxy-(5Z,8Z,11Z)-eicosatrienoate. Its activity is regulated as follows. Inhibited by 1-(1-acetylpiperidin-4-yl)-3-(4-(trifl uoromethoxy)phenyl)urea (TPAU), 1-cyclohexyl-3-dodecylurea (CDU), 12-(3-adamantan-1-yl-ureido)-dodecanoic acid (AUDA), 1-((3S, 5S, 7S)-adamantan-1-yl)-3-(5-(2-(2-ethoxyethoxy) ethoxy)pentyl)urea (AEPU) and to a lesser extent by 8-(3-((3S, 5S, 7S)-adamantan-1-yl)ureido) octanoic acid (AUOA). Functionally, catalyzes the hydrolysis of epoxide-containing fatty acids. Active in vitro against epoxyeicosatrienoic acids (EETs) including 8,9-EET, 9,10-EET, 11,12-EET and 14,15-EET and leukotoxin. This is Epoxide hydrolase 3 (Ephx3) from Mus musculus (Mouse).